A 44-amino-acid polypeptide reads, in one-letter code: Photosystem I reaction center subunit IX (44 aa).

A helical transmembrane segment spans residues 7-27; it reads YLSTVPVLTTLWFGSLAGLLI.

The protein belongs to the PsaJ family.

The protein resides in the plastid. Its subcellular location is the chloroplast thylakoid membrane. In terms of biological role, may help in the organization of the PsaE and PsaF subunits. The chain is Photosystem I reaction center subunit IX from Dioscorea elephantipes (Elephant's foot yam).